A 719-amino-acid chain; its full sequence is 2'-5'-oligoadenylate synthase 2 (719 aa).

Residue G2 is the site of N-myristoyl glycine attachment. 2 OAS domain regions span residues 11–335 (VPAQ…SWNV) and 343–683 (TPGH…WKVP). K378 carries the post-translational modification N6-acetyllysine. S396 contributes to the ATP binding site. Mg(2+)-binding residues include D408, D410, and D481. 2 residues coordinate ATP: R544 and K547.

This sequence belongs to the 2-5A synthase family. As to quaternary structure, homodimer. The cofactor is Mg(2+). In terms of processing, myristoylation is not essential for its activity. Glycosylated. Glycosylation is essential for its activity.

It is found in the cytoplasm. The protein localises to the perinuclear region. It catalyses the reaction 3 ATP = 5'-triphosphoadenylyl-(2'-&gt;5')-adenylyl-(2'-&gt;5')-adenosine + 2 diphosphate. With respect to regulation, produced as a latent enzyme which is activated by double stranded RNA (dsRNA) generated during the course of viral infection. The dsRNA activator must be at least 15 nucleotides long, and no modification of the 2'-hydroxyl group is tolerated. ssRNA or dsDNA do not act as activators. Strongly inhibited by copper, iron and zinc ions. Partially inhibited by cobalt and nickel ions. In terms of biological role, interferon-induced, dsRNA-activated antiviral enzyme which plays a critical role in cellular innate antiviral response. Activated by detection of double stranded RNA (dsRNA): polymerizes higher oligomers of 2'-5'-oligoadenylates (2-5A) from ATP which then bind to the inactive monomeric form of ribonuclease L (RNASEL) leading to its dimerization and subsequent activation. Activation of RNASEL leads to degradation of cellular as well as viral RNA, resulting in the inhibition of protein synthesis, thus terminating viral replication. Can mediate the antiviral effect via the classical RNASEL-dependent pathway or an alternative antiviral pathway independent of RNASEL. In addition, it may also play a role in other cellular processes such as apoptosis, cell growth, differentiation and gene regulation. May act as a negative regulator of lactation, stopping lactation in virally infected mammary gland lobules, thereby preventing transmission of viruses to neonates. Non-infected lobules would not be affected, allowing efficient pup feeding during infection. The polypeptide is 2'-5'-oligoadenylate synthase 2 (Homo sapiens (Human)).